We begin with the raw amino-acid sequence, 95 residues long: Large ribosomal subunit protein bL27 (95 aa).

The propeptide occupies Met-1 to Phe-8. A disordered region spans residues Met-1–Asp-34.

It belongs to the bacterial ribosomal protein bL27 family. The N-terminus is cleaved by ribosomal processing cysteine protease Prp.

This chain is Large ribosomal subunit protein bL27, found in Pediococcus pentosaceus (strain ATCC 25745 / CCUG 21536 / LMG 10740 / 183-1w).